The primary structure comprises 533 residues: 2-succinyl-5-enolpyruvyl-6-hydroxy-3-cyclohexene-1-carboxylate synthase (533 aa).

Belongs to the TPP enzyme family. MenD subfamily. In terms of assembly, homodimer. It depends on Mg(2+) as a cofactor. Mn(2+) serves as cofactor. Requires thiamine diphosphate as cofactor.

It carries out the reaction isochorismate + 2-oxoglutarate + H(+) = 5-enolpyruvoyl-6-hydroxy-2-succinyl-cyclohex-3-ene-1-carboxylate + CO2. It functions in the pathway quinol/quinone metabolism; 1,4-dihydroxy-2-naphthoate biosynthesis; 1,4-dihydroxy-2-naphthoate from chorismate: step 2/7. Its pathway is quinol/quinone metabolism; menaquinone biosynthesis. In terms of biological role, catalyzes the thiamine diphosphate-dependent decarboxylation of 2-oxoglutarate and the subsequent addition of the resulting succinic semialdehyde-thiamine pyrophosphate anion to isochorismate to yield 2-succinyl-5-enolpyruvyl-6-hydroxy-3-cyclohexene-1-carboxylate (SEPHCHC). In Akkermansia muciniphila (strain ATCC BAA-835 / DSM 22959 / JCM 33894 / BCRC 81048 / CCUG 64013 / CIP 107961 / Muc), this protein is 2-succinyl-5-enolpyruvyl-6-hydroxy-3-cyclohexene-1-carboxylate synthase.